A 424-amino-acid chain; its full sequence is Histidine--tRNA ligase (424 aa).

This sequence belongs to the class-II aminoacyl-tRNA synthetase family. Homodimer.

The protein resides in the cytoplasm. It catalyses the reaction tRNA(His) + L-histidine + ATP = L-histidyl-tRNA(His) + AMP + diphosphate + H(+). In Pediococcus pentosaceus (strain ATCC 25745 / CCUG 21536 / LMG 10740 / 183-1w), this protein is Histidine--tRNA ligase.